The following is a 961-amino-acid chain: Transcription factor MYB3R-4 (961 aa).

The segment at 1–33 (MEAESSTPQERIPKLRHGRTSGPARRSTRGQWT) is disordered. HTH myb-type domains follow at residues 24–75 (ARRS…QKVL), 76–131 (NPEL…NPAI), and 132–182 (NKEA…KKKL). 3 DNA-binding regions (H-T-H motif) span residues 52-75 (WKKI…QKVL), 104-127 (WSTI…HNHL), and 155-178 (WAEL…HSSV). 2 disordered regions span residues 390 to 457 (GHSV…LIIS) and 534 to 555 (RPHS…EDMG). 2 stretches are compositionally biased toward polar residues: residues 391–405 (HSVS…NEFN) and 416–430 (SSAS…TKSP). A compositionally biased stretch (low complexity) spans 431–444 (TQSSSSRFTATAAS). Residues 534–554 (RPHSLPKHEPNMTNEQHHEDM) are compositionally biased toward basic and acidic residues. The Nuclear localization signal signature appears at 612-619 (GKKTLVGA). Residues 756-781 (NTGKPVLSTPGQSVTKAEKAQVSTPR) are disordered. The segment covering 764-781 (TPGQSVTKAEKAQVSTPR) has biased composition (polar residues).

Component of a DREAM-like complex which modulates a variety of developmentally regulated genes and of the mitotic genes in proliferating and differentiated cells. Associates with CDKA-1, RBR1 and E2FB, but not with E2FC, in proliferating cells, at early stages of leaves development. Expressed in roots, cotyledons and leaves, especially in vascular tissues, and in flowers.

The protein resides in the nucleus. In terms of biological role, transcription factor that binds 5'-AACGG-3' motifs in gene promoters. Involved in the regulation of cytokinesis, probably via the activation of several G2/M phase-specific genes transcription (e.g. KNOLLE). Required for the maintenance of diploidy. Its function is as follows. Involved in transcription regulation during induced endoreduplication at the powdery mildew (e.g. G.orontii) infection site, thus promoting G.orontii growth and reproduction. The polypeptide is Transcription factor MYB3R-4 (Arabidopsis thaliana (Mouse-ear cress)).